Consider the following 185-residue polypeptide: HTH-type transcriptional regulator SAR2658 (185 aa).

In terms of domain architecture, HTH tetR-type spans 6 to 66 (KENRQRIEEI…YVIQRDLDIF (61 aa)). The segment at residues 29 to 48 (SMNRIAKELGIGMGTLYRHF) is a DNA-binding region (H-T-H motif).

In Staphylococcus aureus (strain MRSA252), this protein is HTH-type transcriptional regulator SAR2658.